The chain runs to 114 residues: UPF0102 protein Shew_0226 (114 aa).

It belongs to the UPF0102 family.

This is UPF0102 protein Shew_0226 from Shewanella loihica (strain ATCC BAA-1088 / PV-4).